A 152-amino-acid chain; its full sequence is Ferredoxin-thioredoxin reductase catalytic chain, chloroplastic (152 aa).

The transit peptide at 1-38 (MTSTVTTTVGCGGLPVRPLSTATRGRPRRCAVRAQAAG) directs the protein to the chloroplast. Cys91 contributes to the [4Fe-4S] cluster binding site. Cys93 acts as the Nucleophile in catalysis. A disulfide bridge links Cys93 with Cys123. The [4Fe-4S] cluster site is built by Cys110, Cys112, and Cys121.

This sequence belongs to the ferredoxin thioredoxin reductase beta subunit family. Heterodimer of subunit A (variable subunit) and subunit B (catalytic subunit). Heterodimeric FTR forms a complex with ferredoxin and thioredoxin. Requires [4Fe-4S] cluster as cofactor.

The protein resides in the plastid. The protein localises to the chloroplast. The enzyme catalyses [thioredoxin]-disulfide + 2 reduced [2Fe-2S]-[ferredoxin] + 2 H(+) = [thioredoxin]-dithiol + 2 oxidized [2Fe-2S]-[ferredoxin]. In terms of biological role, catalytic subunit of the ferredoxin-thioredoxin reductase (FTR), which catalyzes the two-electron reduction of thioredoxins by the electrons provided by reduced ferredoxin. This is Ferredoxin-thioredoxin reductase catalytic chain, chloroplastic (FTRC) from Zea mays (Maize).